A 219-amino-acid chain; its full sequence is Thiopurine S-methyltransferase (219 aa).

Residues tryptophan 10, leucine 45, glutamate 66, and arginine 123 each coordinate S-adenosyl-L-methionine.

Belongs to the class I-like SAM-binding methyltransferase superfamily. TPMT family.

Its subcellular location is the cytoplasm. The catalysed reaction is S-adenosyl-L-methionine + a thiopurine = S-adenosyl-L-homocysteine + a thiopurine S-methylether.. The sequence is that of Thiopurine S-methyltransferase from Shewanella frigidimarina (strain NCIMB 400).